We begin with the raw amino-acid sequence, 642 residues long: MMPFAVTTQGAQQPAPAPKQFGISSPISLAAPKDTDRELTQKLIETLQPFGVFEEEEELQRRILILQKLNNLVKEWIREISESRNLPQAVIENVGGKIFTFGSYRLGVHTKGADIDALCVAPRHVDRNDFFTSFYDKLKLQEEVKDLRAVEEAFVPVIKLCFDGIEIDILFARLALQTIPEDLDLRDDSLLKNLDIRCIRSLNGCRVTDEILHLVPNIDSFRLTLRAIKLWAKCHNIYSNILGFLGGVSWAMLVARTCQLYPNAIASTLVRKFFLVFSEWEWPNPVLLKEPEERNLNLPVWDPRVNPSDRYHLMPIITPAYPQQNSTYNVSVSTRMVMIEEFKQGLAITHEILLNKAEWSKLFEAPSFFQKYKHYIVLLASAPTEKQHLEWVGLVESKIRILVGSLEKNEFITLAHVNPQSFPAPKETADKEEFRTMWVIGLVLKKPENSEILSIDLTYDIQSFTDTVYRQAINSKMFEMDMKIAAMHLRRKELHQLLPNHVLQKKETHLTESVRLTAVTDSSLLLSIDSENSMTAPSPTGTMKTGPLTGNPQGRNSPALAVMAASVTNIQFPDVSLQHVNPIESSGIALSESIPQIPSQPTISPPPKPTMTRVVSSTHLVNHPSRPSGNTATNIPNPILGV.

ATP-binding positions include 101-103, Thr-110, 114-116, Asp-168, Lys-229, Tyr-238, and 247-248; these read FGS, DID, and GV. Residues Asp-114, Asp-116, and Asp-168 each coordinate Mg(2+). Disordered stretches follow at residues 530–553 and 620–642; these read SENSMTAPSPTGTMKTGPLTGNPQ and LVNHPSRPSGNTATNIPNPILGV. The span at 620–636 shows a compositional bias: polar residues; it reads LVNHPSRPSGNTATNIP.

The protein belongs to the poly(A) polymerase family. Interacts with GSG1. The cofactor is Mg(2+). Mn(2+) serves as cofactor. In terms of tissue distribution, testis specific.

The protein resides in the cytoplasm. The protein localises to the nucleus. It carries out the reaction RNA(n) + ATP = RNA(n)-3'-adenine ribonucleotide + diphosphate. This is Poly(A) polymerase beta from Mus musculus (Mouse).